A 205-amino-acid polypeptide reads, in one-letter code: Imidazole glycerol phosphate synthase subunit HisH (205 aa).

Residues 1 to 205 (MITIVDYQMG…RFATAPVEVA (205 aa)) form the Glutamine amidotransferase type-1 domain. Cys79 acts as the Nucleophile in catalysis. Residues His182 and Glu184 contribute to the active site.

As to quaternary structure, heterodimer of HisH and HisF.

It is found in the cytoplasm. It carries out the reaction 5-[(5-phospho-1-deoxy-D-ribulos-1-ylimino)methylamino]-1-(5-phospho-beta-D-ribosyl)imidazole-4-carboxamide + L-glutamine = D-erythro-1-(imidazol-4-yl)glycerol 3-phosphate + 5-amino-1-(5-phospho-beta-D-ribosyl)imidazole-4-carboxamide + L-glutamate + H(+). The catalysed reaction is L-glutamine + H2O = L-glutamate + NH4(+). Its pathway is amino-acid biosynthesis; L-histidine biosynthesis; L-histidine from 5-phospho-alpha-D-ribose 1-diphosphate: step 5/9. Its function is as follows. IGPS catalyzes the conversion of PRFAR and glutamine to IGP, AICAR and glutamate. The HisH subunit catalyzes the hydrolysis of glutamine to glutamate and ammonia as part of the synthesis of IGP and AICAR. The resulting ammonia molecule is channeled to the active site of HisF. In Rhodopirellula baltica (strain DSM 10527 / NCIMB 13988 / SH1), this protein is Imidazole glycerol phosphate synthase subunit HisH.